A 309-amino-acid chain; its full sequence is Homoserine O-succinyltransferase (309 aa).

Cys-142 serves as the catalytic Acyl-thioester intermediate. Substrate-binding residues include Lys-163 and Ser-192. His-235 serves as the catalytic Proton acceptor. Glu-237 is an active-site residue. Residue Arg-249 participates in substrate binding.

This sequence belongs to the MetA family. In terms of assembly, homodimer.

The protein resides in the cytoplasm. It catalyses the reaction L-homoserine + succinyl-CoA = O-succinyl-L-homoserine + CoA. It participates in amino-acid biosynthesis; L-methionine biosynthesis via de novo pathway; O-succinyl-L-homoserine from L-homoserine: step 1/1. In terms of biological role, transfers a succinyl group from succinyl-CoA to L-homoserine, forming succinyl-L-homoserine. The chain is Homoserine O-succinyltransferase from Escherichia coli O127:H6 (strain E2348/69 / EPEC).